The following is a 455-amino-acid chain: Probable ATP-dependent RNA helicase DDX47 (455 aa).

A compositionally biased stretch (basic and acidic residues) spans 1–10 (MAAPEEHDSP). Residues 1-20 (MAAPEEHDSPTEASQPIVEE) form a disordered region. At A2 the chain carries N-acetylalanine. The residue at position 9 (S9) is a Phosphoserine. Residues 24-52 (KTFKDLGVTDVLCEACDQLGWTKPTKIQI) carry the Q motif motif. Residues 55–226 (IPLALQGRDI…RAALKNPVKC (172 aa)) enclose the Helicase ATP-binding domain. 68–75 (AETGSGKT) contacts ATP. Position 149 is a phosphothreonine (T149). The DEAD box signature appears at 174-177 (DEAD). Positions 237–397 (KLQQYYIFIP…GFPTQDDEVM (161 aa)) constitute a Helicase C-terminal domain. Over residues 413–428 (ELREHGEKKKRSREDA) the composition is skewed to basic and acidic residues. A disordered region spans residues 413–455 (ELREHGEKKKRSREDAGDNDDTEGAIGVRNKVAGGKMKKRKGR). S424 carries the post-translational modification Phosphoserine.

Belongs to the DEAD box helicase family. DDX47/RRP3 subfamily. Interacts with AGO1 and AGO2. Interacts with GABARAP. Interacts with NOL8; the interaction is RNA-dependent. In terms of tissue distribution, expressed in skin, lung and breast. Also expressed in the brain.

The protein localises to the nucleus. The protein resides in the nucleolus. It carries out the reaction ATP + H2O = ADP + phosphate + H(+). In terms of biological role, required for efficient ribosome biogenesis. May have a role in mRNA splicing. Involved in apoptosis. The protein is Probable ATP-dependent RNA helicase DDX47 (DDX47) of Homo sapiens (Human).